We begin with the raw amino-acid sequence, 902 residues long: Chitin synthase 3 (902 aa).

Residues 1–15 (MAYNRLDDDYFDNRR) show a composition bias toward basic and acidic residues. The tract at residues 1–68 (MAYNRLDDDY…MGPGRHTPSD (68 aa)) is disordered. Residues 19–30 (NRPPPHRTPSPG) are compositionally biased toward pro residues. Asn-80 carries an N-linked (GlcNAc...) asparagine glycan. The interval 104–161 (HHDAYYNPTYTPTPNEAQTPYGEPGYEHDGRPLLPQQDSYGQYSDNPQQQQQQQGGLK) is disordered. Polar residues-rich tracts occupy residues 111–121 (PTYTPTPNEAQ) and 139–150 (QQDSYGQYSDNP). 9 helical membrane passes run 449 to 469 (SAFGFISVLPGAFSAYRYIAL), 547 to 567 (RWLNGSFFAAIYAIAHFYQFF), 577 to 597 (IAFFIEFTFNTVNMIFAWFAI), 623 to 643 (ILGVCFEWLYGVSLITCFVLA), 656 to 676 (LAMIYFWAIIFCYLLFAAVFI), 699 to 719 (VVVTLILSIMSTYGIWLVASL), 731 to 751 (LVQYMLLSPTFTNVLNVYAFC), 830 to 850 (VVVLLWMVTNFGLAAVVLSTA), and 874 to 894 (VVLYSVAALSGFKFIGAMWFL).

The protein belongs to the chitin synthase family. Class II subfamily.

It is found in the cell membrane. The enzyme catalyses [(1-&gt;4)-N-acetyl-beta-D-glucosaminyl](n) + UDP-N-acetyl-alpha-D-glucosamine = [(1-&gt;4)-N-acetyl-beta-D-glucosaminyl](n+1) + UDP + H(+). In terms of biological role, polymerizes chitin, a structural polymer of the cell wall and septum, by transferring the sugar moiety of UDP-GlcNAc to the non-reducing end of the growing chitin polymer. CHS1 and CHS3 have compensatory functions in cell wall modifications in responses to stresses. Might function as a negative regulator on expression of other CHS genes. The chain is Chitin synthase 3 from Pyricularia oryzae (strain 70-15 / ATCC MYA-4617 / FGSC 8958) (Rice blast fungus).